A 396-amino-acid polypeptide reads, in one-letter code: Probable intron-encoded endonuclease aI3 (396 aa).

Residues 51–90 (TNNTNNNNPADSSSYESRMRAAGNSNSNSNSNSDSNINNT) are disordered. The segment covering 74–90 (NSNSNSNSNSDSNINNT) has biased composition (low complexity).

It belongs to the LAGLIDADG endonuclease family.

The protein localises to the mitochondrion. Functionally, mitochondrial DNA endonuclease involved in intron homing. In Kluyveromyces lactis (strain ATCC 8585 / CBS 2359 / DSM 70799 / NBRC 1267 / NRRL Y-1140 / WM37) (Yeast), this protein is Probable intron-encoded endonuclease aI3 (aI3).